A 120-amino-acid chain; its full sequence is Spermidine export protein MdtJ (120 aa).

A run of 4 helical transmembrane segments spans residues 1 to 21 (MFYW…TLSM), 31 to 51 (AGFI…SFAV), 54 to 74 (IALG…ITIF), and 81 to 101 (EALS…IVLI).

The protein belongs to the drug/metabolite transporter (DMT) superfamily. Small multidrug resistance (SMR) (TC 2.A.7.1) family. MdtJ subfamily. Forms a complex with MdtI.

The protein localises to the cell inner membrane. Its function is as follows. Catalyzes the excretion of spermidine. This is Spermidine export protein MdtJ from Salmonella agona (strain SL483).